The chain runs to 180 residues: GTP cyclohydrolase 1 (180 aa).

Residues C71, H74, and C142 each coordinate Zn(2+).

The protein belongs to the GTP cyclohydrolase I family. Toroid-shaped homodecamer, composed of two pentamers of five dimers.

It catalyses the reaction GTP + H2O = 7,8-dihydroneopterin 3'-triphosphate + formate + H(+). Its pathway is cofactor biosynthesis; 7,8-dihydroneopterin triphosphate biosynthesis; 7,8-dihydroneopterin triphosphate from GTP: step 1/1. The sequence is that of GTP cyclohydrolase 1 from Helicobacter pylori (strain HPAG1).